Here is a 227-residue protein sequence, read N- to C-terminus: Cytochrome c oxidase subunit 2 (227 aa).

At Met-1–Ser-14 the chain is on the mitochondrial intermembrane side. The helical transmembrane segment at Pro-15–Met-45 threads the bilayer. At Leu-46–Gln-59 the chain is on the mitochondrial matrix side. A helical transmembrane segment spans residues Glu-60–Met-87. The Mitochondrial intermembrane segment spans residues Asp-88–Leu-227. Cu cation is bound by residues His-161, Cys-196, Glu-198, Cys-200, His-204, and Met-207. Glu-198 is a Mg(2+) binding site.

This sequence belongs to the cytochrome c oxidase subunit 2 family. As to quaternary structure, component of the cytochrome c oxidase (complex IV, CIV), a multisubunit enzyme composed of 14 subunits. The complex is composed of a catalytic core of 3 subunits MT-CO1, MT-CO2 and MT-CO3, encoded in the mitochondrial DNA, and 11 supernumerary subunits COX4I, COX5A, COX5B, COX6A, COX6B, COX6C, COX7A, COX7B, COX7C, COX8 and NDUFA4, which are encoded in the nuclear genome. The complex exists as a monomer or a dimer and forms supercomplexes (SCs) in the inner mitochondrial membrane with NADH-ubiquinone oxidoreductase (complex I, CI) and ubiquinol-cytochrome c oxidoreductase (cytochrome b-c1 complex, complex III, CIII), resulting in different assemblies (supercomplex SCI(1)III(2)IV(1) and megacomplex MCI(2)III(2)IV(2)). Found in a complex with TMEM177, COA6, COX18, COX20, SCO1 and SCO2. Interacts with TMEM177 in a COX20-dependent manner. Interacts with COX20. Interacts with COX16. Cu cation serves as cofactor.

It is found in the mitochondrion inner membrane. The enzyme catalyses 4 Fe(II)-[cytochrome c] + O2 + 8 H(+)(in) = 4 Fe(III)-[cytochrome c] + 2 H2O + 4 H(+)(out). Component of the cytochrome c oxidase, the last enzyme in the mitochondrial electron transport chain which drives oxidative phosphorylation. The respiratory chain contains 3 multisubunit complexes succinate dehydrogenase (complex II, CII), ubiquinol-cytochrome c oxidoreductase (cytochrome b-c1 complex, complex III, CIII) and cytochrome c oxidase (complex IV, CIV), that cooperate to transfer electrons derived from NADH and succinate to molecular oxygen, creating an electrochemical gradient over the inner membrane that drives transmembrane transport and the ATP synthase. Cytochrome c oxidase is the component of the respiratory chain that catalyzes the reduction of oxygen to water. Electrons originating from reduced cytochrome c in the intermembrane space (IMS) are transferred via the dinuclear copper A center (CU(A)) of subunit 2 and heme A of subunit 1 to the active site in subunit 1, a binuclear center (BNC) formed by heme A3 and copper B (CU(B)). The BNC reduces molecular oxygen to 2 water molecules using 4 electrons from cytochrome c in the IMS and 4 protons from the mitochondrial matrix. This is Cytochrome c oxidase subunit 2 (MT-CO2) from Balaenoptera borealis (Sei whale).